Consider the following 486-residue polypeptide: Cardiolipin synthase A (486 aa).

The next 2 membrane-spanning stretches (helical) occupy residues 3–23 (TFYT…IAGV) and 38–58 (MAWL…YLSV). PLD phosphodiesterase domains lie at 219 to 246 (MDLR…VDPR) and 399 to 426 (EGGL…DMRS). Active-site residues include H224, K226, D231, H404, K406, and D411.

The protein belongs to the phospholipase D family. Cardiolipin synthase subfamily. ClsA sub-subfamily.

The protein resides in the cell inner membrane. The catalysed reaction is 2 a 1,2-diacyl-sn-glycero-3-phospho-(1'-sn-glycerol) = a cardiolipin + glycerol. Its function is as follows. Catalyzes the reversible phosphatidyl group transfer from one phosphatidylglycerol molecule to another to form cardiolipin (CL) (diphosphatidylglycerol) and glycerol. This is Cardiolipin synthase A from Salmonella paratyphi A (strain ATCC 9150 / SARB42).